A 150-amino-acid polypeptide reads, in one-letter code: MQAVIDVKILDARLRDNLPAYATAGSAGLDLRAATEETMTIQPGETQLVPTGIAIHLSDPGLAAMLLPRSGLGHKHGIVLGNLVGLIDSDYQGQMFVSVWNRGQQPFRLEPMERIAQMVIVPVVQASFNIVDDFDASDRGAGGFGSTGRG.

Substrate is bound by residues 69-71 (RSG), asparagine 82, and 86-88 (LID).

Belongs to the dUTPase family. The cofactor is Mg(2+).

It catalyses the reaction dUTP + H2O = dUMP + diphosphate + H(+). It functions in the pathway pyrimidine metabolism; dUMP biosynthesis; dUMP from dCTP (dUTP route): step 2/2. This enzyme is involved in nucleotide metabolism: it produces dUMP, the immediate precursor of thymidine nucleotides and it decreases the intracellular concentration of dUTP so that uracil cannot be incorporated into DNA. This is Deoxyuridine 5'-triphosphate nucleotidohydrolase from Chromobacterium violaceum (strain ATCC 12472 / DSM 30191 / JCM 1249 / CCUG 213 / NBRC 12614 / NCIMB 9131 / NCTC 9757 / MK).